A 108-amino-acid chain; its full sequence is Ig kappa chain V-VI region NQ2-6.1 (108 aa).

Residues 1–23 (QILLTQSPAIMSASPGQKVTMTC) are framework-1. The cysteines at positions 23 and 87 are disulfide-linked. The tract at residues 24–33 (SASSSVSYMY) is complementarity-determining-1. The tract at residues 34-48 (WYQQKPGSSPRLLIY) is framework-2. A complementarity-determining-2 region spans residues 49 to 55 (DTSNLAS). The tract at residues 56-87 (GVPVRFSGSGSATSYSLTITRMQAEDAATYYC) is framework-3. Positions 88-98 (QQWSSYPPMLT) are complementarity-determining-3. Residues 99–108 (FGAGTKLELK) are framework-4.

The polypeptide is Ig kappa chain V-VI region NQ2-6.1 (Mus musculus (Mouse)).